Here is a 276-residue protein sequence, read N- to C-terminus: Formamidopyrimidine-DNA glycosylase (276 aa).

Proline 2 (schiff-base intermediate with DNA) is an active-site residue. Glutamate 3 functions as the Proton donor in the catalytic mechanism. Catalysis depends on lysine 60, which acts as the Proton donor; for beta-elimination activity. 2 residues coordinate DNA: histidine 93 and arginine 112. The FPG-type zinc-finger motif lies at 240-274 (NVYGKKGEPCVTCGTILEKTVVGGRGTHYCPICQP). The active-site Proton donor; for delta-elimination activity is the arginine 264.

This sequence belongs to the FPG family. In terms of assembly, monomer. Zn(2+) is required as a cofactor.

It catalyses the reaction Hydrolysis of DNA containing ring-opened 7-methylguanine residues, releasing 2,6-diamino-4-hydroxy-5-(N-methyl)formamidopyrimidine.. The catalysed reaction is 2'-deoxyribonucleotide-(2'-deoxyribose 5'-phosphate)-2'-deoxyribonucleotide-DNA = a 3'-end 2'-deoxyribonucleotide-(2,3-dehydro-2,3-deoxyribose 5'-phosphate)-DNA + a 5'-end 5'-phospho-2'-deoxyribonucleoside-DNA + H(+). Functionally, involved in base excision repair of DNA damaged by oxidation or by mutagenic agents. Acts as a DNA glycosylase that recognizes and removes damaged bases. Has a preference for oxidized purines, such as 7,8-dihydro-8-oxoguanine (8-oxoG). Has AP (apurinic/apyrimidinic) lyase activity and introduces nicks in the DNA strand. Cleaves the DNA backbone by beta-delta elimination to generate a single-strand break at the site of the removed base with both 3'- and 5'-phosphates. This is Formamidopyrimidine-DNA glycosylase from Bacillus cereus (strain ATCC 10987 / NRS 248).